A 448-amino-acid polypeptide reads, in one-letter code: Cysteine--tRNA ligase (448 aa).

Cys-27 serves as a coordination point for Zn(2+). A 'HIGH' region motif is present at residues 29 to 39 (PTVYNYIHVGN). Zn(2+) is bound by residues Cys-210, His-235, and Glu-239. The 'KMSKS' region signature appears at 267 to 271 (KMSKS). Position 270 (Lys-270) interacts with ATP.

Belongs to the class-I aminoacyl-tRNA synthetase family. In terms of assembly, monomer. It depends on Zn(2+) as a cofactor.

It is found in the cytoplasm. The catalysed reaction is tRNA(Cys) + L-cysteine + ATP = L-cysteinyl-tRNA(Cys) + AMP + diphosphate. In Lactococcus lactis subsp. lactis (strain IL1403) (Streptococcus lactis), this protein is Cysteine--tRNA ligase.